The primary structure comprises 311 residues: Phospho-N-acetylmuramoyl-pentapeptide-transferase (311 aa).

A run of 10 helical transmembrane segments spans residues 2–22 (ENNV…IEGF), 48–68 (GTPT…LLNF), 74–94 (SFLI…DDFM), 104–124 (ITAV…VYFI), 144–164 (LGWF…NAVN), 168–188 (GVDG…LIVG), 192–212 (VVYL…WHPA), 214–234 (IFMG…SFAL), 237–257 (LELF…SVII), and 288–308 (KIAF…IIGW).

This sequence belongs to the glycosyltransferase 4 family. MraY subfamily. Mg(2+) is required as a cofactor.

It is found in the cell inner membrane. It carries out the reaction UDP-N-acetyl-alpha-D-muramoyl-L-alanyl-gamma-D-glutamyl-meso-2,6-diaminopimeloyl-D-alanyl-D-alanine + di-trans,octa-cis-undecaprenyl phosphate = di-trans,octa-cis-undecaprenyl diphospho-N-acetyl-alpha-D-muramoyl-L-alanyl-D-glutamyl-meso-2,6-diaminopimeloyl-D-alanyl-D-alanine + UMP. Its pathway is cell wall biogenesis; peptidoglycan biosynthesis. Functionally, catalyzes the initial step of the lipid cycle reactions in the biosynthesis of the cell wall peptidoglycan: transfers peptidoglycan precursor phospho-MurNAc-pentapeptide from UDP-MurNAc-pentapeptide onto the lipid carrier undecaprenyl phosphate, yielding undecaprenyl-pyrophosphoryl-MurNAc-pentapeptide, known as lipid I. The sequence is that of Phospho-N-acetylmuramoyl-pentapeptide-transferase from Kosmotoga olearia (strain ATCC BAA-1733 / DSM 21960 / TBF 19.5.1).